The following is a 231-amino-acid chain: MAAAEMERTTSFDAAEKLKAADAGGGEVDDELEEGEIVEESNDAASYLGKEITVKHPLEHSWTFWFDNPTARSRQIDWGSSLRNVYTFSTVEDFWGAYNNIHHPSKLVMGADFHCFKHKIEPKWEDPICSNGGTWKMSFSKGKSDTSWLYTLLAMIGHQFDHGDEICGAVVNVRVKGEKIALWTKNAANETAQVSIGKQWKQFLDYSDSVGFIFHDDAKRLDRNAKNRYTV.

A compositionally biased stretch (basic and acidic residues) spans 1–20 (MAAAEMERTTSFDAAEKLKA). The disordered stretch occupies residues 1–34 (MAAAEMERTTSFDAAEKLKAADAGGGEVDDELEE). EIF4G-binding regions lie at residues 56 to 59 (HPLE) and 66 to 102 (FDNP…NNIH). MRNA-binding positions include 74-79 (RQIDWG), lysine 106, and 124-125 (WE). The cysteines at positions 129 and 167 are disulfide-linked. The segment at 150-159 (YTLLAMIGHQ) is EIF4G-binding. Residues 174 to 179 (RVKGEK) and 219 to 223 (KRLDR) contribute to the mRNA site.

The protein belongs to the eukaryotic initiation factor 4E family. EIF4F is a multi-subunit complex, the composition of which varies with external and internal environmental conditions. It is composed of at least EIF4A, EIF4E and EIF4G. EIF4E is also known to interact with other partners. In higher plants two isoforms of EIF4F have been identified, named isoform EIF4F and isoform EIF(iso)4F. Isoform EIF4F has subunits p220 and p26, whereas isoform EIF(iso)4F has subunits p82 and p28. In terms of assembly, (Microbial infection) Interacts with potyvirus viral genome-linked protein (VPg); this interaction is possible in susceptible hosts but impaired in resistant plants. Post-translationally, according to the redox status, the Cys-129-Cys-167 disulfide bridge may have a role in regulating protein function by affecting its ability to bind capped mRNA.

It is found in the nucleus. The protein localises to the cytoplasm. Its function is as follows. Component of the protein complex eIF4F, which is involved in the recognition of the mRNA cap, ATP-dependent unwinding of 5'-terminal secondary structure and recruitment of mRNA to the ribosome. Recognizes and binds the 7-methylguanosine-containing mRNA cap during an early step in the initiation of protein synthesis and facilitates ribosome binding by inducing the unwinding of the mRNAs secondary structures. Key component of recessive resistance to potyviruses. (Microbial infection) Susceptibility host factor required for viral infection (e.g. Potato virus Y (PVY)) by recruiting viral RNAs to the host ribosomal complex via an interaction with viral genome-linked protein (VPg). Displayed sequence is the allele Eva1 that confers resistance to potato virus Y (PVY) by failing to interact with the viral VPg protein. The sequence is that of Eukaryotic translation initiation factor 4E allele Eva1 from Solanum etuberosum (Wild potato).